A 434-amino-acid polypeptide reads, in one-letter code: Beta-enolase (434 aa).

Ala-2 carries the N-acetylalanine modification. Thr-72 is modified (phosphothreonine). Phosphoserine occurs at positions 83 and 157. Substrate contacts are provided by His-158 and Glu-167. At Ser-176 the chain carries Phosphoserine. Thr-205 bears the Phosphothreonine mark. The Proton donor role is filled by Glu-210. Thr-229 carries the post-translational modification Phosphothreonine. Residue Tyr-236 is modified to Phosphotyrosine. Residue Asp-245 coordinates Mg(2+). Residue Ser-263 is modified to Phosphoserine. Positions 293 and 318 each coordinate substrate. Positions 293 and 318 each coordinate Mg(2+). The active-site Proton acceptor is the Lys-343. Substrate contacts are provided by residues 370 to 373 (SHRS) and Lys-394.

This sequence belongs to the enolase family. In terms of assembly, mammalian enolase is composed of 3 isozyme subunits, alpha, beta and gamma, which can form homodimers or heterodimers which are cell-type and development-specific. Interacts with PNKD. It depends on Mg(2+) as a cofactor. In terms of tissue distribution, the alpha/alpha homodimer is expressed in embryo and in most adult tissues. The alpha/beta heterodimer and the beta/beta homodimer are found in striated muscle, and the alpha/gamma heterodimer and the gamma/gamma homodimer in neurons.

The protein resides in the cytoplasm. The enzyme catalyses (2R)-2-phosphoglycerate = phosphoenolpyruvate + H2O. It functions in the pathway carbohydrate degradation; glycolysis; pyruvate from D-glyceraldehyde 3-phosphate: step 4/5. Its function is as follows. Glycolytic enzyme that catalyzes the conversion of 2-phosphoglycerate to phosphoenolpyruvate. Appears to have a function in striated muscle development and regeneration. The protein is Beta-enolase (Eno3) of Rattus norvegicus (Rat).